The primary structure comprises 328 residues: MEKFLKYEIKVNNNQPTNTNPNYGIFEVAPLESGFGITIGNAMRRVLLSCIPGASVFAIAISGVKQEFSNVEGVLEDVTEMVLNFKQLVVRISDLLFEDGEMIEPPLERWPVLKVTAEKKGAVYAKDLECPAGFEVINKDLYLFSLQKDMKLTVSVYVKQGRGFTSFLENRELINSLGIIATDANFSPVLHCGYEVQEVKTSKQKLTDHLTFKIATNGAIKAVDAFAMAAKILIEHLNPIVSVNESIKNLTIIQEKAEERKVKSFAKQIEELDFTVRTFNCLKRSGIHTLQELLSKSLTDIREIRNLGKKSEREIIKKVQELGLKFRS.

Positions 1–244 (MEKFLKYEIK…EHLNPIVSVN (244 aa)) are alpha N-terminal domain (alpha-NTD). Residues 261–328 (KVKSFAKQIE…VQELGLKFRS (68 aa)) are alpha C-terminal domain (alpha-CTD).

It belongs to the RNA polymerase alpha chain family. As to quaternary structure, homodimer. The RNAP catalytic core consists of 2 alpha, 1 beta, 1 beta' and 1 omega subunit. When a sigma factor is associated with the core the holoenzyme is formed, which can initiate transcription.

The catalysed reaction is RNA(n) + a ribonucleoside 5'-triphosphate = RNA(n+1) + diphosphate. DNA-dependent RNA polymerase catalyzes the transcription of DNA into RNA using the four ribonucleoside triphosphates as substrates. This Mycoplasma genitalium (strain ATCC 33530 / DSM 19775 / NCTC 10195 / G37) (Mycoplasmoides genitalium) protein is DNA-directed RNA polymerase subunit alpha.